The chain runs to 208 residues: Small ribosomal subunit protein uS4 (208 aa).

An S4 RNA-binding domain is found at 98–161 (LRLDNVVFRL…RKVVRISEAL (64 aa)).

This sequence belongs to the universal ribosomal protein uS4 family. As to quaternary structure, part of the 30S ribosomal subunit. Contacts protein S5. The interaction surface between S4 and S5 is involved in control of translational fidelity.

Its function is as follows. One of the primary rRNA binding proteins, it binds directly to 16S rRNA where it nucleates assembly of the body of the 30S subunit. With S5 and S12 plays an important role in translational accuracy. In Anaeromyxobacter sp. (strain Fw109-5), this protein is Small ribosomal subunit protein uS4.